We begin with the raw amino-acid sequence, 179 residues long: tRNA (cytidine(56)-2'-O)-methyltransferase (179 aa).

Residues Leu-82, 112-116, and 130-137 contribute to the S-adenosyl-L-methionine site; these read GAEKV and VGNQPHSE.

The protein belongs to the aTrm56 family. Homodimer.

It is found in the cytoplasm. It carries out the reaction cytidine(56) in tRNA + S-adenosyl-L-methionine = 2'-O-methylcytidine(56) in tRNA + S-adenosyl-L-homocysteine + H(+). Its function is as follows. Specifically catalyzes the AdoMet-dependent 2'-O-ribose methylation of cytidine at position 56 in tRNAs. The sequence is that of tRNA (cytidine(56)-2'-O)-methyltransferase from Methanococcus maripaludis (strain C5 / ATCC BAA-1333).